The chain runs to 85 residues: UPF0291 protein SSA_1878 (85 aa).

The segment at 58 to 85 is disordered; sequence GNDVTPEKLRQVQREKGLHGRSLDDPES. Residues 62–85 show a composition bias toward basic and acidic residues; the sequence is TPEKLRQVQREKGLHGRSLDDPES.

This sequence belongs to the UPF0291 family.

The protein resides in the cytoplasm. In Streptococcus sanguinis (strain SK36), this protein is UPF0291 protein SSA_1878.